Reading from the N-terminus, the 245-residue chain is MELNNIPKYSIRGLNIWGFRDMAHFLDHIFQREQVKTGTMVAINAEKVLTAEEDTALSTLLSDAEYLYADGISIVRAIRRKYPDTEVSRVAGADLWEAIMERAGKEGTPIFLVGGKPEILKQTESKLRAQWNVNIVGSQNGYFTPEERNAVFERIHASGAVIVTVAMGSPKQEIFMRDCRKIHSNALYMGVGGTYDVFTGHVKRAPKAWQNLGLEWLYRLLSQPSRIRRQFKLLKFIGYYYSGRL.

This sequence belongs to the glycosyltransferase 26 family.

It carries out the reaction UDP-N-acetyl-alpha-D-mannosaminouronate + N-acetyl-alpha-D-glucosaminyl-di-trans,octa-cis-undecaprenyl diphosphate = beta-D-ManNAcA-(1-&gt;4)-alpha-D-GlcNAc-di-trans,octa-cis-undecaprenyl diphosphate + UDP + H(+). The protein operates within bacterial outer membrane biogenesis; enterobacterial common antigen biosynthesis. In terms of biological role, catalyzes the synthesis of Und-PP-GlcNAc-ManNAcA (Lipid II), the second lipid-linked intermediate involved in enterobacterial common antigen (ECA) synthesis. This Photorhabdus laumondii subsp. laumondii (strain DSM 15139 / CIP 105565 / TT01) (Photorhabdus luminescens subsp. laumondii) protein is UDP-N-acetyl-D-mannosaminuronic acid transferase.